Consider the following 1446-residue polypeptide: ABC-type transporter oblD (1446 aa).

5 N-linked (GlcNAc...) asparagine glycosylation sites follow: Asn9, Asn28, Asn222, Asn281, and Asn305. The ABC transporter 1 domain occupies 104–357 (LEVLSLVSKA…FLDMGFVCPD (254 aa)). The next 6 helical transmembrane spans lie at 468 to 488 (VTIS…SIFY), 502 to 522 (ALLF…MLTL), 548 to 568 (MIMD…VLYF), 577 to 597 (GAFF…SMFF), 610 to 630 (ALPF…FTIP), and 719 to 739 (IGVI…ATDF). The 243-residue stretch at 796–1038 (FQWKDVCFDI…ILIDYFVRNG (243 aa)) folds into the ABC transporter 2 domain. 832–839 (GVSGAGKT) contacts ATP. A run of 5 helical transmembrane segments spans residues 1147–1167 (ALCV…PNTI), 1177–1197 (IFML…HFVA), 1217–1237 (FIIS…VLMF), 1265–1285 (LMVW…IAAF), and 1301–1321 (LCLI…FWIF). N-linked (GlcNAc...) asparagine glycans are attached at residues Asn1344 and Asn1359. Residues 1412-1432 (FGLMWVFIVFNIFAACLLYWW) traverse the membrane as a helical segment.

It belongs to the ABC transporter superfamily. ABCG family. PDR (TC 3.A.1.205) subfamily.

It is found in the cell membrane. ABC-type transporter; part of the gene cluster that mediates the biosynthesis of the sesterterpenes ophiobolins, fungal phytotoxins with potential anti-cancer activities. Acts as a specific transporter involved in ophiobolins secretion. The sequence is that of ABC-type transporter oblD from Aspergillus clavatus (strain ATCC 1007 / CBS 513.65 / DSM 816 / NCTC 3887 / NRRL 1 / QM 1276 / 107).